Here is a 324-residue protein sequence, read N- to C-terminus: DNA repair and recombination protein RadA (324 aa).

114–121 (GEFGSGKT) provides a ligand contact to ATP.

The protein belongs to the eukaryotic RecA-like protein family.

Involved in DNA repair and in homologous recombination. Binds and assemble on single-stranded DNA to form a nucleoprotein filament. Hydrolyzes ATP in a ssDNA-dependent manner and promotes DNA strand exchange between homologous DNA molecules. The sequence is that of DNA repair and recombination protein RadA from Saccharolobus islandicus (strain Y.N.15.51 / Yellowstone #2) (Sulfolobus islandicus).